The primary structure comprises 299 residues: tRNA dimethylallyltransferase (299 aa).

Residue 11–18 participates in ATP binding; that stretch reads GPTGSGKS. 13 to 18 provides a ligand contact to substrate; it reads TGSGKS.

This sequence belongs to the IPP transferase family. Monomer. Mg(2+) serves as cofactor.

It catalyses the reaction adenosine(37) in tRNA + dimethylallyl diphosphate = N(6)-dimethylallyladenosine(37) in tRNA + diphosphate. In terms of biological role, catalyzes the transfer of a dimethylallyl group onto the adenine at position 37 in tRNAs that read codons beginning with uridine, leading to the formation of N6-(dimethylallyl)adenosine (i(6)A). The polypeptide is tRNA dimethylallyltransferase (Pseudarthrobacter chlorophenolicus (strain ATCC 700700 / DSM 12829 / CIP 107037 / JCM 12360 / KCTC 9906 / NCIMB 13794 / A6) (Arthrobacter chlorophenolicus)).